The following is a 426-amino-acid chain: 3-phosphoshikimate 1-carboxyvinyltransferase (426 aa).

Positions 22, 23, and 27 each coordinate 3-phosphoshikimate. Lys-22 is a phosphoenolpyruvate binding site. Phosphoenolpyruvate is bound by residues Gly-96 and Arg-124. 3-phosphoshikimate-binding residues include Ser-170, Ser-171, Gln-172, Ser-198, Asp-314, Asn-337, and Lys-341. Gln-172 contacts phosphoenolpyruvate. Asp-314 (proton acceptor) is an active-site residue. Positions 345, 387, and 412 each coordinate phosphoenolpyruvate.

This sequence belongs to the EPSP synthase family. As to quaternary structure, monomer.

The protein localises to the cytoplasm. The enzyme catalyses 3-phosphoshikimate + phosphoenolpyruvate = 5-O-(1-carboxyvinyl)-3-phosphoshikimate + phosphate. It functions in the pathway metabolic intermediate biosynthesis; chorismate biosynthesis; chorismate from D-erythrose 4-phosphate and phosphoenolpyruvate: step 6/7. Its function is as follows. Catalyzes the transfer of the enolpyruvyl moiety of phosphoenolpyruvate (PEP) to the 5-hydroxyl of shikimate-3-phosphate (S3P) to produce enolpyruvyl shikimate-3-phosphate and inorganic phosphate. This is 3-phosphoshikimate 1-carboxyvinyltransferase from Shewanella sp. (strain ANA-3).